The chain runs to 187 residues: GMP synthase [glutamine-hydrolyzing] subunit A (187 aa).

The Glutamine amidotransferase type-1 domain occupies 1 to 187 (MILIIDNHGQ…KNFAKLCGEL (187 aa)). Catalysis depends on Cys-76, which acts as the Nucleophile. Catalysis depends on residues His-164 and Glu-166.

In terms of assembly, heterodimer composed of a glutamine amidotransferase subunit (A) and a GMP-binding subunit (B).

The catalysed reaction is XMP + L-glutamine + ATP + H2O = GMP + L-glutamate + AMP + diphosphate + 2 H(+). Its pathway is purine metabolism; GMP biosynthesis; GMP from XMP (L-Gln route): step 1/1. In terms of biological role, catalyzes the synthesis of GMP from XMP. In Methanopyrus kandleri (strain AV19 / DSM 6324 / JCM 9639 / NBRC 100938), this protein is GMP synthase [glutamine-hydrolyzing] subunit A.